Here is a 120-residue protein sequence, read N- to C-terminus: SPbeta prophage-derived DSR anti-defense 1 (120 aa).

Belongs to the DSR anti-defense 1 family. Interacts with Bacillus subtilis DSR2 (via C-terminus) in a 2:4 ratio; this interaction leads to the absence of activation of the NADase defense activity of DSR2.

Functionally, counteracts the defense-associated sirtuin 2 (DSR2) defense system of the host. Inhibits the NADase activity of host DSR2 by competing with the tail tube protein that normally activates DSR2. The sequence is that of SPbeta prophage-derived DSR anti-defense 1 (yotI) from Bacillus subtilis (strain 168).